A 211-amino-acid polypeptide reads, in one-letter code: MDLSDIRREYIHGGLRRKDLQANPIDQFNLWLQQAIDANLSDPTAMTVATVDEHGQPFQRIVLLKNVDDAGFVFYTNLGSRKAQHIAHNNKISLHFPWHPLERQVHITGVAEKLTAMENMKYFMSRPKESQIAAIASHQSSRISARGVLEGKYLELKQKFANGEIPVPSFWGGYRIRPESLEFWQGGEHRLHDRFLYSRQDDNWTVDRLAP.

Substrate is bound by residues 7–10 (RREY) and Lys65. FMN-binding positions include 60–65 (RIVLLK), 75–76 (YT), Arg81, Lys82, and Gln104. Residues Tyr122, Arg126, and Ser130 each contribute to the substrate site. FMN is bound by residues 139–140 (QS) and Trp184. Position 190-192 (190-192 (RLH)) interacts with substrate. An FMN-binding site is contributed by Arg194.

It belongs to the pyridoxamine 5'-phosphate oxidase family. Homodimer. It depends on FMN as a cofactor.

The enzyme catalyses pyridoxamine 5'-phosphate + O2 + H2O = pyridoxal 5'-phosphate + H2O2 + NH4(+). The catalysed reaction is pyridoxine 5'-phosphate + O2 = pyridoxal 5'-phosphate + H2O2. Its pathway is cofactor metabolism; pyridoxal 5'-phosphate salvage; pyridoxal 5'-phosphate from pyridoxamine 5'-phosphate: step 1/1. It participates in cofactor metabolism; pyridoxal 5'-phosphate salvage; pyridoxal 5'-phosphate from pyridoxine 5'-phosphate: step 1/1. Its function is as follows. Catalyzes the oxidation of either pyridoxine 5'-phosphate (PNP) or pyridoxamine 5'-phosphate (PMP) into pyridoxal 5'-phosphate (PLP). The sequence is that of Pyridoxine/pyridoxamine 5'-phosphate oxidase from Vibrio cholerae serotype O1 (strain ATCC 39315 / El Tor Inaba N16961).